The primary structure comprises 334 residues: MKKNQFLKESDVTAESVFFMKRRQVLKALGISAAALSLPHAAHADLLSWFKGNDRPPAPAGKPLEFSKPAAWQNNLPLTPADKVSGYNNFYEFGLDKADPAANAGSLKTDPWTLKISGEVAKPLTLDHDDLTRRFPLEERIYRMRCVEAWSMVVPWIGFPLHKLLALAEPTSNAKYVAFETIYAPEQMPGQQDRFIGGGLKYPYVEGLRLDEAMHPLTLMTVGVYGKALPPQNGAPVRLIVPWKYGFKGIKSIVSIKLTSERPPTTWNLAAPDEYGFYANVNPHVDHPRWSQATERFIGSGGILDVQRQPTLLFNGYADQVASLYRGLDLRENF.

Residues 1–44 (MKKNQFLKESDVTAESVFFMKRRQVLKALGISAAALSLPHAAHA) constitute a signal peptide (tat-type signal). Mo-molybdopterin-binding positions include Asn88, 91 to 92 (YE), Cys146, Thr181, Asn233, Arg238, and 249 to 251 (GIK).

The protein belongs to the MsrP family. In terms of assembly, heterodimer of a catalytic subunit (MsrP) and a heme-binding subunit (MsrQ). The cofactor is Mo-molybdopterin. Predicted to be exported by the Tat system. The position of the signal peptide cleavage has not been experimentally proven.

Its subcellular location is the periplasm. It catalyses the reaction L-methionyl-[protein] + a quinone + H2O = L-methionyl-(S)-S-oxide-[protein] + a quinol. The enzyme catalyses L-methionyl-[protein] + a quinone + H2O = L-methionyl-(R)-S-oxide-[protein] + a quinol. In terms of biological role, part of the MsrPQ system that repairs oxidized periplasmic proteins containing methionine sulfoxide residues (Met-O), using respiratory chain electrons. Thus protects these proteins from oxidative-stress damage caused by reactive species of oxygen and chlorine generated by the host defense mechanisms. MsrPQ is essential for the maintenance of envelope integrity under bleach stress, rescuing a wide series of structurally unrelated periplasmic proteins from methionine oxidation, including the primary periplasmic chaperone SurA and the lipoprotein Pal. The catalytic subunit MsrP is non-stereospecific, being able to reduce both (R-) and (S-) diastereoisomers of methionine sulfoxide. The protein is Protein-methionine-sulfoxide reductase catalytic subunit MsrP of Escherichia coli O127:H6 (strain E2348/69 / EPEC).